Consider the following 244-residue polypeptide: Ribosomal RNA large subunit methyltransferase E (244 aa).

Residues Gly81, Trp83, Asp109, Asp125, and Asp149 each contribute to the S-adenosyl-L-methionine site. Lys189 serves as the catalytic Proton acceptor.

It belongs to the class I-like SAM-binding methyltransferase superfamily. RNA methyltransferase RlmE family.

The protein resides in the cytoplasm. The catalysed reaction is uridine(2552) in 23S rRNA + S-adenosyl-L-methionine = 2'-O-methyluridine(2552) in 23S rRNA + S-adenosyl-L-homocysteine + H(+). Its function is as follows. Specifically methylates the uridine in position 2552 of 23S rRNA at the 2'-O position of the ribose in the fully assembled 50S ribosomal subunit. This Cereibacter sphaeroides (strain ATCC 17023 / DSM 158 / JCM 6121 / CCUG 31486 / LMG 2827 / NBRC 12203 / NCIMB 8253 / ATH 2.4.1.) (Rhodobacter sphaeroides) protein is Ribosomal RNA large subunit methyltransferase E.